The sequence spans 1378 residues: DNA-directed RNA polymerase subunit beta (1378 aa).

The protein belongs to the RNA polymerase beta chain family. The RNAP catalytic core consists of 2 alpha, 1 beta, 1 beta' and 1 omega subunit. When a sigma factor is associated with the core the holoenzyme is formed, which can initiate transcription.

The enzyme catalyses RNA(n) + a ribonucleoside 5'-triphosphate = RNA(n+1) + diphosphate. Functionally, DNA-dependent RNA polymerase catalyzes the transcription of DNA into RNA using the four ribonucleoside triphosphates as substrates. The protein is DNA-directed RNA polymerase subunit beta of Ruegeria pomeroyi (strain ATCC 700808 / DSM 15171 / DSS-3) (Silicibacter pomeroyi).